Here is a 567-residue protein sequence, read N- to C-terminus: Probable E3 ubiquitin-protein ligase ARI8 (567 aa).

The disordered stretch occupies residues 1 to 27; it reads MEADDDFYSGTENYSDYADSDEDDADG. Over residues 18-27 the composition is skewed to acidic residues; the sequence is ADSDEDDADG. Positions 124-337 are TRIAD supradomain; that stretch reads GELDCGICFE…GGFYACNRYE (214 aa). Residues Cys128, Cys131, Cys145, His147, Cys150, Cys153, Cys173, Cys178, Cys217, Cys222, Cys239, Cys241, Cys246, Cys249, His254, Cys259, Cys286, and Cys289 each coordinate Zn(2+). The RING-type 1 zinc finger occupies 128–178; the sequence is CGICFETFLSDKLHAAACGHPFCDSCWEGYITTAINDGPGCLTLRCPDPSC. Residues 197-259 form an IBR-type zinc finger; that stretch reads QKYTSYFVRS…AEEAHRPVDC (63 aa). The segment at 286 to 316 adopts an RING-type 2; atypical zinc-finger fold; it reads CPKCKRPIEKNQGCMHITCTPPCKFEFCWLC. Cys299 is a catalytic residue. 6 residues coordinate Zn(2+): Cys304, Cys308, Cys313, Cys316, His323, and Cys333. A disordered region spans residues 514–543; it reads DAYDRTSSSKSLGGKTKGSSSKASSSDSSH. The segment covering 521–542 has biased composition (low complexity); that stretch reads SSKSLGGKTKGSSSKASSSDSS. The segment at 540 to 567 adopts a RanBP2-type zinc-finger fold; the sequence is DSSHWPCEYCTYVNPRSTTICQMCEHGR.

The protein belongs to the RBR family. Ariadne subfamily. Requires Zn(2+) as cofactor. Ubiquitous.

The enzyme catalyses [E2 ubiquitin-conjugating enzyme]-S-ubiquitinyl-L-cysteine + [acceptor protein]-L-lysine = [E2 ubiquitin-conjugating enzyme]-L-cysteine + [acceptor protein]-N(6)-ubiquitinyl-L-lysine.. It functions in the pathway protein modification; protein ubiquitination. In terms of biological role, might act as an E3 ubiquitin-protein ligase, or as part of E3 complex, which accepts ubiquitin from specific E2 ubiquitin-conjugating enzymes and then transfers it to substrates. The polypeptide is Probable E3 ubiquitin-protein ligase ARI8 (ARI8) (Arabidopsis thaliana (Mouse-ear cress)).